We begin with the raw amino-acid sequence, 255 residues long: Developmental and secondary metabolism regulator MVE1 (255 aa).

Positions 31–226 constitute a Velvet domain; sequence GRKLTYRMSV…AEQGCRVRIR (196 aa). Residues 45–50 carry the Nuclear localization signal motif; that stretch reads VRARAC. Disordered regions lie at residues 163–184 and 229–255; these read CKSP…DAHV and VRMR…QARA. Residues 245–255 show a composition bias toward acidic residues; the sequence is NYEDETAQARA.

Belongs to the velvet family. VeA subfamily. In terms of assembly, component of the heterotrimeric velvet complex composed of LAE1, MVE1 and VEL2; MVE1 acting as a bridging protein between LAE1 and VEL2.

Its subcellular location is the nucleus. It localises to the cytoplasm. In terms of biological role, component of the velvet transcription factor complex that controls sexual/asexual developmental ratio in response to light, promoting sexual development in the darkness while stimulating asexual sporulation under illumination. The velvet complex hat acts as a global regulator for secondary metabolite gene expression. Controls the expression of the melanin gene cluster. Mediates the light-stimulated formation of aerial mycelia. In Zymoseptoria tritici (strain CBS 115943 / IPO323) (Speckled leaf blotch fungus), this protein is Developmental and secondary metabolism regulator MVE1.